The chain runs to 241 residues: Ribose-5-phosphate isomerase A (241 aa).

Substrate-binding positions include 29 to 32 (TGTT), 84 to 87 (DGAD), and 97 to 100 (KGGG). Residue Glu-106 is the Proton acceptor of the active site. Position 124 (Lys-124) interacts with substrate.

Belongs to the ribose 5-phosphate isomerase family. Homodimer.

The enzyme catalyses aldehydo-D-ribose 5-phosphate = D-ribulose 5-phosphate. It functions in the pathway carbohydrate degradation; pentose phosphate pathway; D-ribose 5-phosphate from D-ribulose 5-phosphate (non-oxidative stage): step 1/1. In terms of biological role, catalyzes the reversible conversion of ribose-5-phosphate to ribulose 5-phosphate. The protein is Ribose-5-phosphate isomerase A of Thermoplasma acidophilum (strain ATCC 25905 / DSM 1728 / JCM 9062 / NBRC 15155 / AMRC-C165).